Reading from the N-terminus, the 261-residue chain is Small ribosomal subunit protein eS4z (261 aa).

The region spanning 42–104 (LPLVLIIRNR…TNENFRLLYD (63 aa)) is the S4 RNA-binding domain.

It belongs to the eukaryotic ribosomal protein eS4 family.

The protein localises to the cytoplasm. In Arabidopsis thaliana (Mouse-ear cress), this protein is Small ribosomal subunit protein eS4z (RPS4A).